The following is an 801-amino-acid chain: Potassium transporter 1 (801 aa).

The interval 1 to 20 (MSSALEVEGSGSPGVEPAAT) is disordered. The Cytoplasmic portion of the chain corresponds to 1–57 (MSSALEVEGSGSPGVEPAATATASRLKRHDSLFGDAEKVSGGKHHGGSAVSWAVTLH). The helical transmembrane segment at 58-80 (LAFQSVGIIYGDIGTSPLYVYSS) threads the bilayer. Residues 81–94 (TFPDGIGHRDDLVG) lie on the Extracellular side of the membrane. The chain crosses the membrane as a helical span at residues 95–115 (VLSLILYTLIIIPMLKYVFIV). At 116–181 (LYANDNGDGG…HKLESSRAAK (66 aa)) the chain is on the cytoplasmic side. Residues 182 to 202 (MALFFLTILGTSMVMGDGTLT) form a helical membrane-spanning segment. Residues 203–219 (PAISVLSAVSGIREKAP) are Extracellular-facing. Residues 220-240 (NLTQTQVVLISVAILFMLFSV) form a helical membrane-spanning segment. At 241–247 (QRFGTDK) the chain is on the cytoplasmic side. Residues 248–268 (VGYTFAPIISVWFLLIAGIGL) traverse the membrane as a helical segment. Over 269-298 (YNLVVHEITILKAFNPWYIVQYFRRNGKKG) the chain is Extracellular. Residues 299-319 (WVSLGGVVLCVTGTEGMFADL) form a helical membrane-spanning segment. Over 320-328 (GHFNIRAVQ) the chain is Cytoplasmic. The chain crosses the membrane as a helical span at residues 329–349 (ISFNCILFPSVALCYIGQAAY). At 350–375 (LRKFPENVSDTFYKSIPGKYRDRLNF) the chain is on the extracellular side. A helical transmembrane segment spans residues 376 to 398 (GPLFWPTFIVAILAAIIASQAML). At 399-429 (SGAFAILSKALSLGCLPRVRVIHTSKKYEGQ) the chain is on the cytoplasmic side. A helical membrane pass occupies residues 430-450 (VYIPEVNFMMGLASIIVTIAF). At 451-461 (RTTTSIGNAYG) the chain is on the extracellular side. The helical transmembrane segment at 462-482 (ICVVTTFMVTTHLMTVVMLLI) threads the bilayer. Topologically, residues 483–487 (WKKHL) are cytoplasmic. Residues 488-508 (VFILLFYCVFGFTEVVYLSSI) traverse the membrane as a helical segment. Residues 509 to 511 (LSK) are Extracellular-facing. A helical transmembrane segment spans residues 512 to 532 (FVDGGYLPFCFAMVLMTMMAT). Residues 533 to 801 (WHYVHVRRYW…LLKVGITYEI (269 aa)) are Cytoplasmic-facing. The segment at 679 to 728 (DDDDEAAARPRRSTSSAVHSEEAIQAASSGRTTASSVQLQAGGEPPAAMD) is disordered. Over residues 704–717 (AASSGRTTASSVQL) the composition is skewed to polar residues.

This sequence belongs to the HAK/KUP transporter (TC 2.A.72.3) family. As to expression, expressed almost exclusively in roots.

It localises to the cell membrane. High-affinity potassium transporter. Also transports rubidium, with the same affinity and cesium, with a lower affinity. In Oryza sativa subsp. japonica (Rice), this protein is Potassium transporter 1 (HAK1).